Here is a 102-residue protein sequence, read N- to C-terminus: NADH-quinone oxidoreductase subunit K 1 (102 aa).

The next 3 membrane-spanning stretches (helical) occupy residues 5-25 (LYEV…CVVA), 30-50 (VIMM…TFVG), and 62-82 (VFSL…LAMV).

Belongs to the complex I subunit 4L family. As to quaternary structure, NDH-1 is composed of 14 different subunits. Subunits NuoA, H, J, K, L, M, N constitute the membrane sector of the complex.

It is found in the cell inner membrane. The enzyme catalyses a quinone + NADH + 5 H(+)(in) = a quinol + NAD(+) + 4 H(+)(out). Functionally, NDH-1 shuttles electrons from NADH, via FMN and iron-sulfur (Fe-S) centers, to quinones in the respiratory chain. The immediate electron acceptor for the enzyme in this species is believed to be ubiquinone. Couples the redox reaction to proton translocation (for every two electrons transferred, four hydrogen ions are translocated across the cytoplasmic membrane), and thus conserves the redox energy in a proton gradient. This Geobacter sp. (strain M21) protein is NADH-quinone oxidoreductase subunit K 1.